Consider the following 166-residue polypeptide: Cyclic pyranopterin monophosphate synthase (166 aa).

Substrate-binding positions include 83-85 and 121-122; these read LCH and ME. The active site involves Asp-136.

The protein belongs to the MoaC family. As to quaternary structure, homohexamer; trimer of dimers.

It carries out the reaction (8S)-3',8-cyclo-7,8-dihydroguanosine 5'-triphosphate = cyclic pyranopterin phosphate + diphosphate. Its pathway is cofactor biosynthesis; molybdopterin biosynthesis. In terms of biological role, catalyzes the conversion of (8S)-3',8-cyclo-7,8-dihydroguanosine 5'-triphosphate to cyclic pyranopterin monophosphate (cPMP). In Rhodospirillum rubrum (strain ATCC 11170 / ATH 1.1.1 / DSM 467 / LMG 4362 / NCIMB 8255 / S1), this protein is Cyclic pyranopterin monophosphate synthase.